The following is a 316-amino-acid chain: Transcription initiation factor IIB (316 aa).

The TFIIB-type zinc-finger motif lies at 11–42 (PKVTCPNHPDALLVEDYRAGDMICSECGLVVG). Zn(2+) is bound by residues Cys15, His18, Cys34, and Cys37. 2 tandem repeats follow at residues 124–200 (MSDR…LILK) and 218–294 (FCSN…LIYP).

The protein belongs to the TFIIB family.

It localises to the nucleus. It is found in the chromosome. The enzyme catalyses L-lysyl-[protein] + acetyl-CoA = N(6)-acetyl-L-lysyl-[protein] + CoA + H(+). Functionally, general transcription factor that plays a role in transcription initiation by RNA polymerase II (Pol II). Involved in the pre-initiation complex (PIC) formation and Pol II recruitment at promoter DNA. Together with the TATA box-bound TBP forms the core initiation complex and provides a bridge between TBP and the Pol II-TFIIF complex. Released from the PIC early following the onset of transcription during the initiation and elongation transition and reassociates with TBP during the next transcription cycle. Associates with chromatin to core promoter-specific regions. Binds to two distinct DNA core promoter consensus sequence elements in a TBP-independent manner; these IIB-recognition elements (BREs) are localized immediately upstream (BREu), 5'-[GC][GC][GA]CGCC-3', and downstream (BREd), 5'-[GA]T[TGA][TG][GT][TG][TG]-3', of the TATA box element. Modulates transcription start site selection. Also exhibits autoacetyltransferase activity that contributes to the activated transcription. The polypeptide is Transcription initiation factor IIB (Xenopus laevis (African clawed frog)).